A 553-amino-acid chain; its full sequence is MRSDTITQGLERTPHRALLKGTGLPQSEMGKPFIGIATSFTDLIPGHVGMRDLERFIEKGVHTGGGYSFFFGIPGVCDGISMGHKGMHYSLPTRELIADMVESVAEAHRLDGLVLLTNCDKITPGMLMAAARLDIPCIVVTAGPMMSGRGDAGRKYSFVTDTFEAMARYKAGVIDDAELARCEENACPGMGSCQGLFTANTMAILTETLGMSLPRCGTALAVSALKRRIAFASGERIVDLVRQNITPRSILTREAFENAIRVDLALGGSSNTVLHLLAIAHEAGVELPLETFDILAKETPQLASMNPAGEHFMEDLDVAGGVAGVLKQLGDKIHDCPTLMGLSTKEIAASLKGVDEEVIHPLSNPVKKEGGIAVLFGNICPKGAVVKQSGVSDKMMKFTGTARCFDSEDKAMAAMMGGVVKGGDVVVIRYEGPKGGPGMREMLAPTAALMGLGLGDSVALITDGRFSGGTRGPCIGHIAPEAAAGGPIGLIEDGDTIELDIPARSLKVMVSDEVLAERRARWVAPEPKIKKGWLARYAKVVTSAHTGAITTAE.

Asp-78 contributes to the Mg(2+) binding site. Cys-119 is a [2Fe-2S] cluster binding site. Mg(2+) contacts are provided by Asp-120 and Lys-121. Lys-121 bears the N6-carboxylysine mark. Residue Cys-193 coordinates [2Fe-2S] cluster. Glu-441 serves as a coordination point for Mg(2+). Ser-467 acts as the Proton acceptor in catalysis.

It belongs to the IlvD/Edd family. In terms of assembly, homodimer. It depends on [2Fe-2S] cluster as a cofactor. The cofactor is Mg(2+).

It catalyses the reaction (2R)-2,3-dihydroxy-3-methylbutanoate = 3-methyl-2-oxobutanoate + H2O. The enzyme catalyses (2R,3R)-2,3-dihydroxy-3-methylpentanoate = (S)-3-methyl-2-oxopentanoate + H2O. Its pathway is amino-acid biosynthesis; L-isoleucine biosynthesis; L-isoleucine from 2-oxobutanoate: step 3/4. The protein operates within amino-acid biosynthesis; L-valine biosynthesis; L-valine from pyruvate: step 3/4. Its function is as follows. Functions in the biosynthesis of branched-chain amino acids. Catalyzes the dehydration of (2R,3R)-2,3-dihydroxy-3-methylpentanoate (2,3-dihydroxy-3-methylvalerate) into 2-oxo-3-methylpentanoate (2-oxo-3-methylvalerate) and of (2R)-2,3-dihydroxy-3-methylbutanoate (2,3-dihydroxyisovalerate) into 2-oxo-3-methylbutanoate (2-oxoisovalerate), the penultimate precursor to L-isoleucine and L-valine, respectively. In Citrifermentans bemidjiense (strain ATCC BAA-1014 / DSM 16622 / JCM 12645 / Bem) (Geobacter bemidjiensis), this protein is Dihydroxy-acid dehydratase.